The chain runs to 125 residues: Large ribosomal subunit protein bL12 (125 aa).

The protein belongs to the bacterial ribosomal protein bL12 family. Homodimer. Part of the ribosomal stalk of the 50S ribosomal subunit. Forms a multimeric L10(L12)X complex, where L10 forms an elongated spine to which 2 to 4 L12 dimers bind in a sequential fashion. Binds GTP-bound translation factors.

Functionally, forms part of the ribosomal stalk which helps the ribosome interact with GTP-bound translation factors. Is thus essential for accurate translation. The chain is Large ribosomal subunit protein bL12 from Rickettsia felis (strain ATCC VR-1525 / URRWXCal2) (Rickettsia azadi).